The chain runs to 429 residues: Glutamate-1-semialdehyde 2,1-aminomutase 1 (429 aa).

Lysine 268 bears the N6-(pyridoxal phosphate)lysine mark.

The protein belongs to the class-III pyridoxal-phosphate-dependent aminotransferase family. HemL subfamily. As to quaternary structure, homodimer. Requires pyridoxal 5'-phosphate as cofactor.

It localises to the cytoplasm. It catalyses the reaction (S)-4-amino-5-oxopentanoate = 5-aminolevulinate. The protein operates within porphyrin-containing compound metabolism; protoporphyrin-IX biosynthesis; 5-aminolevulinate from L-glutamyl-tRNA(Glu): step 2/2. The chain is Glutamate-1-semialdehyde 2,1-aminomutase 1 from Staphylococcus haemolyticus (strain JCSC1435).